The primary structure comprises 304 residues: MAHYHNDYKKNDEVEFVRTGYGKDMVKVLHIQRDGKYHSIKEVATSVQLTLSSKKDYVYGDNSDIIPTDTIKNTVHVLAKFKGIKSIETFAMNICEHFLSSFNHVIRAQVYVEEVPWKRFEKNGVKHVHAFIHNPTGTHFCEVEQMRSGPPVIHSGIKDLKVLKTTQSGFEGFIKDQFTTLPEVKDRCFATKVYCKWRYHQGRDVDFEATWDTVRDIVLEKFAGPYDKGEYSPSVQKTLYDIQVHSLSRVPEMEDMEISLPNIHYFNIDMSKMGLINKEEVLLPLDNPYGRITGTAKRKLASKL.

At Ala-2 the chain carries N-acetylalanine. N6-acetyllysine; alternate occurs at positions 10 and 23. Residues Lys-10 and Lys-23 each carry the N6-succinyllysine; alternate modification. Lys-23 serves as the catalytic Charge relay system. Residues Lys-27 and Lys-36 each carry the N6-acetyllysine modification. Residues Ser-39 and Ser-63 each carry the phosphoserine modification. Thr-68 acts as the Charge relay system in catalysis. Urate contacts are provided by Thr-68 and Asp-69. N6-acetyllysine occurs at positions 118, 122, and 164. Residue Phe-170 participates in urate binding. N6-acetyllysine is present on residues Lys-175 and Lys-185. Arg-187 serves as a coordination point for urate. N6-acetyllysine; alternate is present on residues Lys-221 and Lys-228. An N6-succinyllysine; alternate mark is found at Lys-221 and Lys-228. Ser-232 carries the post-translational modification Phosphoserine. Urate is bound by residues Val-235, Gln-236, and Asn-262. Residue His-264 is the Charge relay system of the active site. An N6-acetyllysine modification is found at Lys-278. A Phosphotyrosine modification is found at Tyr-289. Positions 302–304 match the Microbody targeting signal motif; it reads SKL.

Belongs to the uricase family.

It localises to the peroxisome. It catalyses the reaction urate + O2 + H2O = 5-hydroxyisourate + H2O2. It participates in purine metabolism; urate degradation; (S)-allantoin from urate: step 1/3. Catalyzes the oxidation of uric acid to 5-hydroxyisourate, which is further processed to form (S)-allantoin. The sequence is that of Uricase (UOX) from Canis lupus familiaris (Dog).